We begin with the raw amino-acid sequence, 338 residues long: UDP-glucose 4-epimerase (338 aa).

Residues 11–12, 31–36, 58–59, 80–84, Asn-99, Ser-124, Tyr-149, Lys-153, and Phe-178 each bind NAD(+); these read YI, DNLCNS, DI, and FAGLK. Ser-124 and Tyr-149 together coordinate substrate. Tyr-149 (proton acceptor) is an active-site residue. Substrate contacts are provided by residues Asn-179, 199–200, 216–218, Arg-231, and 292–295; these read NL, SVF, and RPGD.

Belongs to the NAD(P)-dependent epimerase/dehydratase family. As to quaternary structure, homodimer. It depends on NAD(+) as a cofactor.

The catalysed reaction is UDP-alpha-D-glucose = UDP-alpha-D-galactose. Its pathway is carbohydrate metabolism; galactose metabolism. In terms of biological role, involved in the metabolism of galactose. Catalyzes the conversion of UDP-galactose (UDP-Gal) to UDP-glucose (UDP-Glc) through a mechanism involving the transient reduction of NAD. This chain is UDP-glucose 4-epimerase (galE), found in Pasteurella multocida (strain Pm70).